A 245-amino-acid chain; its full sequence is Sugar fermentation stimulation protein homolog (245 aa).

Belongs to the SfsA family.

The polypeptide is Sugar fermentation stimulation protein homolog (Yersinia pestis bv. Antiqua (strain Nepal516)).